Consider the following 512-residue polypeptide: Chromatin assembly factor 1 subunit B (512 aa).

WD repeat units follow at residues 16-56, 65-105, 126-165, and 168-207; these read DDHT…SSTK, RHTQ…TTLA, SMGS…LLTQ, and DHSH…KNPK. Residues 239 to 257 are compositionally biased toward polar residues; the sequence is DESSGISEPIETSNNNESP. Residues 239–261 are disordered; it reads DESSGISEPIETSNNNESPVSKH. WD repeat units follow at residues 373–413 and 417–458; these read SFSN…PFYR and LHYS…VKSQ. The tract at residues 459 to 512 is disordered; sequence HKISLPEKRSASPSSIDDSQDNTAGGPATTTLIPRKVESSKVSKKRIAPTPVYP. 3 positions are modified to phosphoserine: Ser-468, Ser-470, and Ser-473. The segment covering 469–490 has biased composition (polar residues); it reads ASPSSIDDSQDNTAGGPATTTL.

Belongs to the WD repeat HIR1 family. Component of chromatin assembly factor 1 (CAF-1), composed of pcf1, pcf2 and pcf3. Interacts with pcn1/PCNA during S-phase. Interacts with swi6 at the G1/S-phase transition and early S-phase, but not in the G2 phase. The CAF-1 complex interacts with histone H3-H4 dimers.

Its subcellular location is the cytoplasm. The protein resides in the nucleus. Its function is as follows. Acts as a component of the histone chaperone complex chromatin assembly factor 1 (CAF-1), which assembles histone octamers onto DNA during replication and repair. CAF-1 performs the first step of the nucleosome assembly process, bringing newly synthesized histones H3 and H4 to replicating DNA; histones H2A/H2B can bind to this chromatin precursor subsequent to DNA replication to complete the histone octamer. Plays a role in the maintenance of heterochromatin. This Schizosaccharomyces pombe (strain 972 / ATCC 24843) (Fission yeast) protein is Chromatin assembly factor 1 subunit B.